The chain runs to 834 residues: Protein translocase subunit SecA (834 aa).

Residues Gln-85, Gly-103–Thr-107, and Asp-491 each bind ATP. Zn(2+) contacts are provided by Cys-818, Cys-820, Cys-829, and Cys-830.

The protein belongs to the SecA family. Monomer and homodimer. Part of the essential Sec protein translocation apparatus which comprises SecA, SecYEG and auxiliary proteins SecDF. Other proteins may also be involved. The cofactor is Zn(2+).

Its subcellular location is the cell membrane. The protein localises to the cytoplasm. It catalyses the reaction ATP + H2O + cellular proteinSide 1 = ADP + phosphate + cellular proteinSide 2.. In terms of biological role, part of the Sec protein translocase complex. Interacts with the SecYEG preprotein conducting channel. Has a central role in coupling the hydrolysis of ATP to the transfer of proteins into and across the cell membrane, serving as an ATP-driven molecular motor driving the stepwise translocation of polypeptide chains across the membrane. In Clostridium kluyveri (strain ATCC 8527 / DSM 555 / NBRC 12016 / NCIMB 10680 / K1), this protein is Protein translocase subunit SecA.